A 520-amino-acid polypeptide reads, in one-letter code: Cytochrome P450 6d3 (520 aa).

Heme is bound at residue Cys-461.

The protein belongs to the cytochrome P450 family. Heme serves as cofactor.

It is found in the endoplasmic reticulum membrane. The protein localises to the microsome membrane. In terms of biological role, metabolizes pyrethroid insecticides and other xenobiotics. The chain is Cytochrome P450 6d3 (CYP6D3) from Musca domestica (House fly).